A 254-amino-acid polypeptide reads, in one-letter code: MLPYWCPLLLAALVLQYATIDAVNYCNLPCRGDRFHVGCGESAFAQECGESPETLDLLKEHTDEILSKINDVRDHVAKGSWGLPMAARMKVVVWDEELARLATRHTKGCLAETHACRNTERFLFPGQLNFEYTDDKLPQTKELIDAAIKKGHLQKHNISREIIESYRDNGPDGNVEELALALSDRVTAVGCGLTTWQDGAKARALLTCNFSSQNTWGRPVYKIGNSPGEKCIEKDETYKNLCSASEPIDPNESN.

The N-terminal stretch at 1-22 (MLPYWCPLLLAALVLQYATIDA) is a signal peptide. Residues 31–33 (RGD) carry the Cell attachment site motif. The SCP domain occupies 66–210 (LSKINDVRDH…KARALLTCNF (145 aa)).

Belongs to the CRISP family. In terms of tissue distribution, expressed in salivary glands.

The protein localises to the secreted. In terms of biological role, inhibits platelet aggregation induced by all agonists tested (ADP, arachidonic acid, the thromboxane A2 analog U46619, thrombin, and snake venom snaclecs (TMVA that activates platelet through GPIB, and stejnulxin that specifically acts through GPVI (GP6))). May act by competing with fibrinogen for binding to glycoprotein IIb/IIIa (ITGA2B/ITGB3). This Tabanus yao (Horsefly) protein is Tabinhibitin 6.